We begin with the raw amino-acid sequence, 228 residues long: DNA mismatch repair protein MutH (228 aa).

It belongs to the MutH family.

The protein localises to the cytoplasm. Sequence-specific endonuclease that cleaves unmethylated GATC sequences. It is involved in DNA mismatch repair. This is DNA mismatch repair protein MutH from Yersinia enterocolitica serotype O:8 / biotype 1B (strain NCTC 13174 / 8081).